We begin with the raw amino-acid sequence, 276 residues long: 2-dehydro-3-deoxyphosphooctonate aldolase (276 aa).

It belongs to the KdsA family.

Its subcellular location is the cytoplasm. It catalyses the reaction D-arabinose 5-phosphate + phosphoenolpyruvate + H2O = 3-deoxy-alpha-D-manno-2-octulosonate-8-phosphate + phosphate. It functions in the pathway carbohydrate biosynthesis; 3-deoxy-D-manno-octulosonate biosynthesis; 3-deoxy-D-manno-octulosonate from D-ribulose 5-phosphate: step 2/3. Its pathway is bacterial outer membrane biogenesis; lipopolysaccharide biosynthesis. This chain is 2-dehydro-3-deoxyphosphooctonate aldolase, found in Helicobacter pylori (strain HPAG1).